Here is a 405-residue protein sequence, read N- to C-terminus: CCA-adding enzyme (405 aa).

2 residues coordinate ATP: G8 and R11. Residues G8 and R11 each coordinate CTP. 2 residues coordinate Mg(2+): E21 and D23. ATP-binding residues include R91, R137, and R140. 3 residues coordinate CTP: R91, R137, and R140. The HD domain maps to 220–326 (PLSHGLSTLS…LNFFDELDLW (107 aa)).

It belongs to the tRNA nucleotidyltransferase/poly(A) polymerase family. Bacterial CCA-adding enzyme type 2 subfamily. Requires Mg(2+) as cofactor.

The catalysed reaction is a tRNA precursor + 2 CTP + ATP = a tRNA with a 3' CCA end + 3 diphosphate. It catalyses the reaction a tRNA with a 3' CCA end + 2 CTP + ATP = a tRNA with a 3' CCACCA end + 3 diphosphate. Its function is as follows. Catalyzes the addition and repair of the essential 3'-terminal CCA sequence in tRNAs without using a nucleic acid template. Adds these three nucleotides in the order of C, C, and A to the tRNA nucleotide-73, using CTP and ATP as substrates and producing inorganic pyrophosphate. tRNA 3'-terminal CCA addition is required both for tRNA processing and repair. Also involved in tRNA surveillance by mediating tandem CCA addition to generate a CCACCA at the 3' terminus of unstable tRNAs. While stable tRNAs receive only 3'-terminal CCA, unstable tRNAs are marked with CCACCA and rapidly degraded. In Hamiltonella defensa subsp. Acyrthosiphon pisum (strain 5AT), this protein is CCA-adding enzyme.